A 375-amino-acid chain; its full sequence is All-trans-retinol dehydrogenase [NAD(+)] ADH1B (375 aa).

Residue Ser2 is modified to N-acetylserine. Ser23 bears the Phosphoserine mark. Tyr35 carries the phosphotyrosine modification. 7 residues coordinate Zn(2+): Cys47, His68, Cys98, Cys101, Cys104, Cys112, and Cys175. Residues 200–205 (GLGGVG), Asp224, Lys229, 293–295 (VGV), and Arg370 contribute to the NAD(+) site.

It belongs to the zinc-containing alcohol dehydrogenase family. In terms of assembly, dimer of identical or non-identical chains of three types; alpha, beta and gamma. It depends on Zn(2+) as a cofactor.

It localises to the cytoplasm. The catalysed reaction is all-trans-retinol + NAD(+) = all-trans-retinal + NADH + H(+). The enzyme catalyses all-trans-4-hydroxyretinol + NAD(+) = all-trans-4-hydroxyretinal + NADH + H(+). It catalyses the reaction all-trans-4-oxoretinol + NAD(+) = all-trans-4-oxoretinal + NADH + H(+). In terms of biological role, catalyzes the NAD-dependent oxidation of all-trans-retinol and its derivatives such as all-trans-4-hydroxyretinol and may participate in retinoid metabolism. In vitro can also catalyze the NADH-dependent reduction of all-trans-retinal and its derivatives such as all-trans-4-oxoretinal. Catalyzes in the oxidative direction with higher efficiency. Has the same affinity for all-trans-4-hydroxyretinol and all-trans-4-oxoretinal. This is All-trans-retinol dehydrogenase [NAD(+)] ADH1B from Homo sapiens (Human).